A 353-amino-acid chain; its full sequence is Quinolinate synthase (353 aa).

Iminosuccinate contacts are provided by His47 and Ser68. Residue Cys113 participates in [4Fe-4S] cluster binding. Iminosuccinate contacts are provided by residues 139 to 141 and Ser156; that span reads YAN. Cys200 contacts [4Fe-4S] cluster. Iminosuccinate is bound by residues 226–228 and Thr243; that span reads HPE. Cys297 provides a ligand contact to [4Fe-4S] cluster.

This sequence belongs to the quinolinate synthase family. Type 1 subfamily. It depends on [4Fe-4S] cluster as a cofactor.

It localises to the cytoplasm. The enzyme catalyses iminosuccinate + dihydroxyacetone phosphate = quinolinate + phosphate + 2 H2O + H(+). It functions in the pathway cofactor biosynthesis; NAD(+) biosynthesis; quinolinate from iminoaspartate: step 1/1. Catalyzes the condensation of iminoaspartate with dihydroxyacetone phosphate to form quinolinate. The chain is Quinolinate synthase from Vibrio vulnificus (strain YJ016).